Reading from the N-terminus, the 132-residue chain is Small ribosomal subunit protein uS13 (132 aa).

The segment covering 101–125 (RGLPVRGQRTKTNARTRKGPRKTVA) has biased composition (basic residues). The tract at residues 101 to 132 (RGLPVRGQRTKTNARTRKGPRKTVANKKIETR) is disordered.

The protein belongs to the universal ribosomal protein uS13 family. As to quaternary structure, part of the 30S ribosomal subunit. Forms a loose heterodimer with protein S19. Forms two bridges to the 50S subunit in the 70S ribosome.

In terms of biological role, located at the top of the head of the 30S subunit, it contacts several helices of the 16S rRNA. In the 70S ribosome it contacts the 23S rRNA (bridge B1a) and protein L5 of the 50S subunit (bridge B1b), connecting the 2 subunits; these bridges are implicated in subunit movement. Contacts the tRNAs in the A and P-sites. In Ureaplasma parvum serovar 3 (strain ATCC 27815 / 27 / NCTC 11736), this protein is Small ribosomal subunit protein uS13.